A 1032-amino-acid chain; its full sequence is Kinesin heavy chain isoform 5A (1032 aa).

A2 bears the N-acetylalanine mark. The Kinesin motor domain occupies S9 to I327. G86–T93 serves as a coordination point for ATP. Residues V174–K315 are microtubule-binding. The necessary for interaction with ZFYVE27 stretch occupies residues E271 to A361. Positions A331–Y906 form a coiled coil. The interaction with BICD2 stretch occupies residues T353–S1032. T397 carries the phosphothreonine modification. Residues V904–R939 form a disordered region. The segment at K907–S1032 is globular.

Belongs to the TRAFAC class myosin-kinesin ATPase superfamily. Kinesin family. Kinesin subfamily. In terms of assembly, oligomer composed of two heavy chains and two light chains. Interacts with GRIP1. Interacts with FMR1 (via C-terminus); this interaction is increased in a mGluR-dependent manner. Interacts with BORCS5. Interacts with ZFYVE27. Interacts with VAPA, VAPB, SURF4, RAB11A (GDP-bound form), RAB11B (GDP-bound form) and RTN3 in a ZFYVE27-dependent manner. Interacts with BICD2. Interacts with DTNB.

The protein resides in the cytoplasm. The protein localises to the perinuclear region. It localises to the cytoskeleton. It is found in the perikaryon. It carries out the reaction ATP + H2O + a kinesin associated with a microtubule at position (n) = ADP + phosphate a kinesin associated with a microtubule at position (n+1, toward the plus end).. In terms of biological role, microtubule-dependent motor required for slow axonal transport of neurofilament proteins (NFH, NFM and NFL). Can induce formation of neurite-like membrane protrusions in non-neuronal cells in a ZFYVE27-dependent manner. The ZFYVE27-KIF5A complex contributes to the vesicular transport of VAPA, VAPB, SURF4, RAB11A, RAB11B and RTN3 proteins in neurons. Required for anterograde axonal transportation of MAPK8IP3/JIP3 which is essential for MAPK8IP3/JIP3 function in axon elongation. The chain is Kinesin heavy chain isoform 5A (KIF5A) from Pongo abelii (Sumatran orangutan).